A 511-amino-acid polypeptide reads, in one-letter code: GMP synthase [glutamine-hydrolyzing] (511 aa).

Residues 5–195 enclose the Glutamine amidotransferase type-1 domain; it reads LILVLDFGGQ…LYKICGCSGD (191 aa). Residue Cys82 is the Nucleophile of the active site. Active-site residues include His169 and Glu171. Positions 196-386 constitute a GMPS ATP-PPase domain; the sequence is WKMASFIEHS…LGIPEDIVMR (191 aa). 223–229 contacts ATP; it reads SGGVDSS.

In terms of assembly, homodimer.

It carries out the reaction XMP + L-glutamine + ATP + H2O = GMP + L-glutamate + AMP + diphosphate + 2 H(+). The protein operates within purine metabolism; GMP biosynthesis; GMP from XMP (L-Gln route): step 1/1. Functionally, catalyzes the synthesis of GMP from XMP. This chain is GMP synthase [glutamine-hydrolyzing], found in Acetivibrio thermocellus (strain ATCC 27405 / DSM 1237 / JCM 9322 / NBRC 103400 / NCIMB 10682 / NRRL B-4536 / VPI 7372) (Clostridium thermocellum).